We begin with the raw amino-acid sequence, 636 residues long: 1-deoxy-D-xylulose-5-phosphate synthase (636 aa).

Residues His84 and 125–127 contribute to the thiamine diphosphate site; that span reads GHS. Asp156 serves as a coordination point for Mg(2+). Residues 157–158, Asn185, Phe292, and Glu375 contribute to the thiamine diphosphate site; that span reads GA. Asn185 contacts Mg(2+).

This sequence belongs to the transketolase family. DXPS subfamily. Homodimer. Mg(2+) is required as a cofactor. The cofactor is thiamine diphosphate.

It catalyses the reaction D-glyceraldehyde 3-phosphate + pyruvate + H(+) = 1-deoxy-D-xylulose 5-phosphate + CO2. Its pathway is metabolic intermediate biosynthesis; 1-deoxy-D-xylulose 5-phosphate biosynthesis; 1-deoxy-D-xylulose 5-phosphate from D-glyceraldehyde 3-phosphate and pyruvate: step 1/1. In terms of biological role, catalyzes the acyloin condensation reaction between C atoms 2 and 3 of pyruvate and glyceraldehyde 3-phosphate to yield 1-deoxy-D-xylulose-5-phosphate (DXP). This Cellvibrio japonicus (strain Ueda107) (Pseudomonas fluorescens subsp. cellulosa) protein is 1-deoxy-D-xylulose-5-phosphate synthase.